The sequence spans 319 residues: Beta-ketoacyl-[acyl-carrier-protein] synthase III (319 aa).

Active-site residues include C115 and H246. The interval Q247–R251 is ACP-binding. N276 is a catalytic residue.

The protein belongs to the thiolase-like superfamily. FabH family. As to quaternary structure, homodimer.

It localises to the cytoplasm. It catalyses the reaction malonyl-[ACP] + acetyl-CoA + H(+) = 3-oxobutanoyl-[ACP] + CO2 + CoA. The protein operates within lipid metabolism; fatty acid biosynthesis. Catalyzes the condensation reaction of fatty acid synthesis by the addition to an acyl acceptor of two carbons from malonyl-ACP. Catalyzes the first condensation reaction which initiates fatty acid synthesis and may therefore play a role in governing the total rate of fatty acid production. Possesses both acetoacetyl-ACP synthase and acetyl transacylase activities. Its substrate specificity determines the biosynthesis of branched-chain and/or straight-chain of fatty acids. In Coxiella burnetii (strain RSA 493 / Nine Mile phase I), this protein is Beta-ketoacyl-[acyl-carrier-protein] synthase III.